The chain runs to 414 residues: Serine hydroxymethyltransferase (414 aa).

(6S)-5,6,7,8-tetrahydrofolate-binding positions include leucine 117 and 121-123; that span reads GHL. Lysine 226 bears the N6-(pyridoxal phosphate)lysine mark. (6S)-5,6,7,8-tetrahydrofolate-binding positions include glutamate 241 and 349-351; that span reads TPF.

The protein belongs to the SHMT family. Homodimer. Requires pyridoxal 5'-phosphate as cofactor.

It is found in the cytoplasm. The catalysed reaction is (6R)-5,10-methylene-5,6,7,8-tetrahydrofolate + glycine + H2O = (6S)-5,6,7,8-tetrahydrofolate + L-serine. It participates in one-carbon metabolism; tetrahydrofolate interconversion. Its pathway is amino-acid biosynthesis; glycine biosynthesis; glycine from L-serine: step 1/1. Catalyzes the reversible interconversion of serine and glycine with tetrahydrofolate (THF) serving as the one-carbon carrier. Also exhibits THF-independent aldolase activity toward beta-hydroxyamino acids, producing glycine and aldehydes, via a retro-aldol mechanism. The protein is Serine hydroxymethyltransferase of Methanothrix thermoacetophila (strain DSM 6194 / JCM 14653 / NBRC 101360 / PT) (Methanosaeta thermophila).